The following is a 312-amino-acid chain: Ornithine carbamoyltransferase (312 aa).

Residues 60–63, Gln87, Arg111, and 138–141 contribute to the carbamoyl phosphate site; these read STRT and HPCQ. L-ornithine is bound by residues Asn169, Asp229, and 233-234; that span reads SM. Residues 268-269 and Arg296 each bind carbamoyl phosphate; that span reads CL.

The protein belongs to the aspartate/ornithine carbamoyltransferase superfamily. OTCase family.

It is found in the cytoplasm. The catalysed reaction is carbamoyl phosphate + L-ornithine = L-citrulline + phosphate + H(+). It functions in the pathway amino-acid biosynthesis; L-arginine biosynthesis; L-arginine from L-ornithine and carbamoyl phosphate: step 1/3. Reversibly catalyzes the transfer of the carbamoyl group from carbamoyl phosphate (CP) to the N(epsilon) atom of ornithine (ORN) to produce L-citrulline. This chain is Ornithine carbamoyltransferase, found in Rhodopseudomonas palustris (strain BisA53).